The primary structure comprises 258 residues: ADP-dependent (S)-NAD(P)H-hydrate dehydratase (258 aa).

In terms of domain architecture, YjeF C-terminal spans 1 to 258 (MGRLQRTLSN…VIECIPKTIR (258 aa)). Gly201 serves as a coordination point for AMP. Asp202 contacts (6S)-NADPHX.

It belongs to the NnrD/CARKD family. Homotetramer. It depends on Mg(2+) as a cofactor.

The catalysed reaction is (6S)-NADHX + ADP = AMP + phosphate + NADH + H(+). The enzyme catalyses (6S)-NADPHX + ADP = AMP + phosphate + NADPH + H(+). Functionally, catalyzes the dehydration of the S-form of NAD(P)HX at the expense of ADP, which is converted to AMP. Together with NAD(P)HX epimerase, which catalyzes the epimerization of the S- and R-forms, the enzyme allows the repair of both epimers of NAD(P)HX, a damaged form of NAD(P)H that is a result of enzymatic or heat-dependent hydration. In Natrialba magadii (strain ATCC 43099 / DSM 3394 / CCM 3739 / CIP 104546 / IAM 13178 / JCM 8861 / NBRC 102185 / NCIMB 2190 / MS3) (Natronobacterium magadii), this protein is ADP-dependent (S)-NAD(P)H-hydrate dehydratase.